The primary structure comprises 827 residues: SH3-containing GRB2-like protein 3-interacting protein 1 (827 aa).

Disordered regions lie at residues Met-1 to Lys-116, Ile-143 to Pro-199, and Ile-223 to Thr-278. Composition is skewed to basic and acidic residues over residues Arg-16–Gly-32 and Leu-40–Gly-53. Phosphoserine is present on residues Ser-78, Ser-104, Ser-105, Ser-107, Ser-149, Ser-151, Ser-156, and Ser-169. A phosphothreonine mark is found at Thr-180 and Thr-182. At Ser-236 the chain carries Phosphoserine. Positions Thr-245–Pro-260 are enriched in pro residues. Phosphothreonine is present on residues Thr-247 and Thr-259. Phosphoserine occurs at positions 265, 287, 289, 300, 316, and 319. Over residues Ser-265–Ala-276 the composition is skewed to polar residues. Positions Phe-315–Thr-505 are disordered. The span at Ser-319 to Val-333 shows a compositional bias: basic and acidic residues. Phosphothreonine occurs at positions 324, 328, and 335. The span at Thr-335–Asp-345 shows a compositional bias: low complexity. Positions Ser-346–Val-369 are enriched in pro residues. Ser-371 carries the post-translational modification Phosphoserine. Positions Glu-377–Tyr-392 are enriched in basic and acidic residues. Phosphoserine is present on Ser-398. Thr-409 is modified (phosphothreonine). Residues Ala-436 to Ser-455 show a composition bias toward low complexity. Pro residues predominate over residues Thr-456–Lys-474. Over residues Ser-481 to Ser-491 the composition is skewed to low complexity. Position 485 is a phosphoserine (Ser-485). The 269-residue stretch at Thr-558–Asp-826 folds into the MHD domain. Interaction with DPF motifs-containing proteins regions lie at residues Pro-560–Thr-566, Ser-592–Pro-594, Thr-666–Asn-669, and Ser-812–Arg-817. The interval Met-648 to Asn-827 is necessary and sufficient to mediate interaction with CANX.

As to quaternary structure, interacts with proteins essential or regulating the formation of functional clathrin-coated pits. Interacts with CANX. Interacts with AP2A1. Interacts with EPS15. Interacts with SH3GL3. Interacts with AMPH. Interacts with ITSN1 (via SH3 domains). Interacts with and REPS1. Specifically expressed in brain. Also detected at lower levels in spleen and adipose tissue.

The protein resides in the membrane. The protein localises to the clathrin-coated pit. May function in clathrin-mediated endocytosis. Has both a membrane binding/tubulating activity and the ability to recruit proteins essential to the formation of functional clathrin-coated pits. Has a preference for membranes enriched in phosphatidylserine and phosphoinositides and is required for the endocytosis of the transferrin receptor. May also bind tubulin. May play a role in the regulation of energy homeostasis. The polypeptide is SH3-containing GRB2-like protein 3-interacting protein 1 (SGIP1) (Psammomys obesus (Fat sand rat)).